We begin with the raw amino-acid sequence, 494 residues long: Nuclear distribution protein PAC1 (494 aa).

Residues 14–46 (QKNELDKSVLRYLNWNYKQTVRHEHAQDYESVR) form the LisH domain. The stretch at 90-123 (NSIVRLQKKIIELEQNTETLVSQIKDLNTQVSEL) forms a coiled coil. WD repeat units follow at residues 153 to 192 (NVES…IPLA), 196 to 244 (SHTK…CKFQ), 251 to 292 (GHEH…SLKT), 295 to 334 (PHSQ…SVGT), 347 to 395 (HFIE…LMAH), 415 to 454 (GHLS…HVWE), and 457 to 492 (HTGF…SNVF).

The protein belongs to the WD repeat LIS1/nudF family. Self-associates. Interacts with NDL1 and dynein.

The protein localises to the cytoplasm. The protein resides in the cytoskeleton. Its subcellular location is the spindle pole. Its function is as follows. Positively regulates the activity of the minus-end directed microtubule motor protein dynein. Plays a central role in positioning the mitotic spindle at the bud neck during cell division. Targets cytoplasmic dynein to microtubule plus ends, thereby promoting dynein-mediated microtubule sliding along the bud cortex and consequently the movement of the mitotic spindle to the bud neck. This Saccharomyces cerevisiae (strain Lalvin EC1118 / Prise de mousse) (Baker's yeast) protein is Nuclear distribution protein PAC1.